The following is a 513-amino-acid chain: Histidine ammonia-lyase (513 aa).

A cross-link (5-imidazolinone (Ala-Gly)) is located at residues 144–146 (ASG). A 2,3-didehydroalanine (Ser) modification is found at Ser145.

Belongs to the PAL/histidase family. In terms of processing, contains an active site 4-methylidene-imidazol-5-one (MIO), which is formed autocatalytically by cyclization and dehydration of residues Ala-Ser-Gly.

The protein localises to the cytoplasm. It catalyses the reaction L-histidine = trans-urocanate + NH4(+). It participates in amino-acid degradation; L-histidine degradation into L-glutamate; N-formimidoyl-L-glutamate from L-histidine: step 1/3. The protein is Histidine ammonia-lyase of Streptococcus gordonii (strain Challis / ATCC 35105 / BCRC 15272 / CH1 / DL1 / V288).